The sequence spans 260 residues: Acetylglutamate kinase (260 aa).

Residues 46-47, R68, and N160 contribute to the substrate site; that span reads GG.

Belongs to the acetylglutamate kinase family. ArgB subfamily.

It is found in the cytoplasm. It carries out the reaction N-acetyl-L-glutamate + ATP = N-acetyl-L-glutamyl 5-phosphate + ADP. Its pathway is amino-acid biosynthesis; L-arginine biosynthesis; N(2)-acetyl-L-ornithine from L-glutamate: step 2/4. Its function is as follows. Catalyzes the ATP-dependent phosphorylation of N-acetyl-L-glutamate. This chain is Acetylglutamate kinase, found in Shewanella oneidensis (strain ATCC 700550 / JCM 31522 / CIP 106686 / LMG 19005 / NCIMB 14063 / MR-1).